The following is a 38-amino-acid chain: Large ribosomal subunit protein bL36 (38 aa).

It belongs to the bacterial ribosomal protein bL36 family.

In Stutzerimonas stutzeri (strain A1501) (Pseudomonas stutzeri), this protein is Large ribosomal subunit protein bL36.